The chain runs to 146 residues: Nitric oxide reductase subunit C (146 aa).

Residues 13–29 form a helical; Signal-anchor membrane-spanning segment; that stretch reads IYFGGSVFFFLVFLGLT. Residues Cys61, Cys64, and His65 each contribute to the heme c site.

In terms of assembly, heterodimer of cytochromes b (large subunit) and c (small subunit).

The protein resides in the cell membrane. In terms of biological role, component of the anaerobic respiratory chain that transforms nitrate to dinitrogen (denitrification). The chain is Nitric oxide reductase subunit C (norC) from Stutzerimonas stutzeri (Pseudomonas stutzeri).